Reading from the N-terminus, the 415-residue chain is Tyrosine--tRNA ligase (415 aa).

Tyr-34 contacts L-tyrosine. A 'HIGH' region motif is present at residues 39 to 48; the sequence is PTSDSLTVGH. Positions 164 and 168 each coordinate L-tyrosine. The 'KMSKS' region signature appears at 225–229; it reads KFGKS. Lys-228 serves as a coordination point for ATP. The S4 RNA-binding domain occupies 348 to 414; sequence IPLSEALVKT…GKKNNSLIIL (67 aa).

Belongs to the class-I aminoacyl-tRNA synthetase family. TyrS type 1 subfamily. Homodimer.

The protein localises to the cytoplasm. The catalysed reaction is tRNA(Tyr) + L-tyrosine + ATP = L-tyrosyl-tRNA(Tyr) + AMP + diphosphate + H(+). Functionally, catalyzes the attachment of tyrosine to tRNA(Tyr) in a two-step reaction: tyrosine is first activated by ATP to form Tyr-AMP and then transferred to the acceptor end of tRNA(Tyr). This is Tyrosine--tRNA ligase from Phytoplasma australiense.